Here is a 379-residue protein sequence, read N- to C-terminus: 8-amino-7-oxononanoate synthase (379 aa).

Residues arginine 27 and arginine 34 each coordinate substrate. 114–115 (GY) is a binding site for pyridoxal 5'-phosphate. Histidine 139 contributes to the substrate binding site. Pyridoxal 5'-phosphate is bound by residues serine 187, 212-215 (DDAH), and 232-235 (TLSK). Lysine 235 bears the N6-(pyridoxal phosphate)lysine mark. Substrate is bound at residue threonine 344.

The protein belongs to the class-II pyridoxal-phosphate-dependent aminotransferase family. BioF subfamily. In terms of assembly, homodimer. Requires pyridoxal 5'-phosphate as cofactor.

It catalyses the reaction 6-carboxyhexanoyl-[ACP] + L-alanine + H(+) = (8S)-8-amino-7-oxononanoate + holo-[ACP] + CO2. The protein operates within cofactor biosynthesis; biotin biosynthesis. Functionally, catalyzes the decarboxylative condensation of pimeloyl-[acyl-carrier protein] and L-alanine to produce 8-amino-7-oxononanoate (AON), [acyl-carrier protein], and carbon dioxide. This chain is 8-amino-7-oxononanoate synthase, found in Methylobacterium nodulans (strain LMG 21967 / CNCM I-2342 / ORS 2060).